The chain runs to 273 residues: Formamidopyrimidine-DNA glycosylase (273 aa).

The Schiff-base intermediate with DNA role is filled by P2. E3 (proton donor) is an active-site residue. Catalysis depends on K58, which acts as the Proton donor; for beta-elimination activity. H91, R109, and R154 together coordinate DNA. Residues 239-273 (FVYARTGEPCRICNAPVRQIVQGQRSTFYCPNCQK) form an FPG-type zinc finger. R263 serves as the catalytic Proton donor; for delta-elimination activity.

This sequence belongs to the FPG family. Monomer. Zn(2+) serves as cofactor.

The enzyme catalyses Hydrolysis of DNA containing ring-opened 7-methylguanine residues, releasing 2,6-diamino-4-hydroxy-5-(N-methyl)formamidopyrimidine.. The catalysed reaction is 2'-deoxyribonucleotide-(2'-deoxyribose 5'-phosphate)-2'-deoxyribonucleotide-DNA = a 3'-end 2'-deoxyribonucleotide-(2,3-dehydro-2,3-deoxyribose 5'-phosphate)-DNA + a 5'-end 5'-phospho-2'-deoxyribonucleoside-DNA + H(+). Involved in base excision repair of DNA damaged by oxidation or by mutagenic agents. Acts as a DNA glycosylase that recognizes and removes damaged bases. Has a preference for oxidized purines, such as 7,8-dihydro-8-oxoguanine (8-oxoG). Has AP (apurinic/apyrimidinic) lyase activity and introduces nicks in the DNA strand. Cleaves the DNA backbone by beta-delta elimination to generate a single-strand break at the site of the removed base with both 3'- and 5'-phosphates. In Herminiimonas arsenicoxydans, this protein is Formamidopyrimidine-DNA glycosylase.